A 330-amino-acid chain; its full sequence is Ketol-acid reductoisomerase (NADP(+)) (330 aa).

Positions 2-182 (VKIFYDKDVT…GLTKVGVIQT (181 aa)) constitute a KARI N-terminal Rossmann domain. NADP(+) contacts are provided by residues 25-28 (YGSQ), Arg48, Ser53, and 83-86 (DEVQ). The active site involves His108. Gly134 serves as a coordination point for NADP(+). The 146-residue stretch at 183–328 (TFREETETDL…KELRKMCGLE (146 aa)) folds into the KARI C-terminal knotted domain. Mg(2+)-binding residues include Asp191, Glu195, Glu227, and Glu231. Ser252 serves as a coordination point for substrate.

It belongs to the ketol-acid reductoisomerase family. Requires Mg(2+) as cofactor.

It carries out the reaction (2R)-2,3-dihydroxy-3-methylbutanoate + NADP(+) = (2S)-2-acetolactate + NADPH + H(+). The enzyme catalyses (2R,3R)-2,3-dihydroxy-3-methylpentanoate + NADP(+) = (S)-2-ethyl-2-hydroxy-3-oxobutanoate + NADPH + H(+). The protein operates within amino-acid biosynthesis; L-isoleucine biosynthesis; L-isoleucine from 2-oxobutanoate: step 2/4. It participates in amino-acid biosynthesis; L-valine biosynthesis; L-valine from pyruvate: step 2/4. Its function is as follows. Involved in the biosynthesis of branched-chain amino acids (BCAA). Catalyzes an alkyl-migration followed by a ketol-acid reduction of (S)-2-acetolactate (S2AL) to yield (R)-2,3-dihydroxy-isovalerate. In the isomerase reaction, S2AL is rearranged via a Mg-dependent methyl migration to produce 3-hydroxy-3-methyl-2-ketobutyrate (HMKB). In the reductase reaction, this 2-ketoacid undergoes a metal-dependent reduction by NADPH to yield (R)-2,3-dihydroxy-isovalerate. The sequence is that of Ketol-acid reductoisomerase (NADP(+)) from Methanocaldococcus jannaschii (strain ATCC 43067 / DSM 2661 / JAL-1 / JCM 10045 / NBRC 100440) (Methanococcus jannaschii).